Reading from the N-terminus, the 348-residue chain is D-alanine--D-alanine ligase (348 aa).

The ATP-grasp domain maps to 136–344 (KSVFKSYNLP…LEKLVANLIE (209 aa)). Residue 171 to 226 (NKIISYPCFIKPANLGSSVGITKAYSKEEFIAGIEFAAKYDERIIVEKSIEGRELE) coordinates ATP. Asp-297, Glu-311, and Asn-313 together coordinate Mg(2+).

It belongs to the D-alanine--D-alanine ligase family. Requires Mg(2+) as cofactor. The cofactor is Mn(2+).

The protein resides in the cytoplasm. It catalyses the reaction 2 D-alanine + ATP = D-alanyl-D-alanine + ADP + phosphate + H(+). It functions in the pathway cell wall biogenesis; peptidoglycan biosynthesis. In terms of biological role, cell wall formation. This is D-alanine--D-alanine ligase from Prochlorococcus marinus (strain NATL2A).